The following is a 240-amino-acid chain: UDP-2,3-diacylglucosamine hydrolase (240 aa).

Mn(2+) is bound by residues D8, H10, D41, N79, and H114. Substrate is bound at residue 79-80 (NR). 5 residues coordinate substrate: D122, S160, N164, K167, and H195. Mn(2+) contacts are provided by H195 and H197.

Belongs to the LpxH family. It depends on Mn(2+) as a cofactor.

The protein localises to the cell inner membrane. The enzyme catalyses UDP-2-N,3-O-bis[(3R)-3-hydroxytetradecanoyl]-alpha-D-glucosamine + H2O = 2-N,3-O-bis[(3R)-3-hydroxytetradecanoyl]-alpha-D-glucosaminyl 1-phosphate + UMP + 2 H(+). Its pathway is glycolipid biosynthesis; lipid IV(A) biosynthesis; lipid IV(A) from (3R)-3-hydroxytetradecanoyl-[acyl-carrier-protein] and UDP-N-acetyl-alpha-D-glucosamine: step 4/6. Hydrolyzes the pyrophosphate bond of UDP-2,3-diacylglucosamine to yield 2,3-diacylglucosamine 1-phosphate (lipid X) and UMP by catalyzing the attack of water at the alpha-P atom. Involved in the biosynthesis of lipid A, a phosphorylated glycolipid that anchors the lipopolysaccharide to the outer membrane of the cell. The polypeptide is UDP-2,3-diacylglucosamine hydrolase (Escherichia coli O6:K15:H31 (strain 536 / UPEC)).